Here is a 124-residue protein sequence, read N- to C-terminus: Small ribosomal subunit protein uS12cy (124 aa).

The protein belongs to the universal ribosomal protein uS12 family. As to quaternary structure, part of the 30S ribosomal subunit.

The protein localises to the plastid. It localises to the chloroplast. In terms of biological role, with S4 and S5 plays an important role in translational accuracy. Located at the interface of the 30S and 50S subunits. In Olimarabidopsis pumila (Dwarf rocket), this protein is Small ribosomal subunit protein uS12cy (rps12-B).